Reading from the N-terminus, the 216-residue chain is Uracil phosphoribosyltransferase (216 aa).

5-phospho-alpha-D-ribose 1-diphosphate is bound by residues Arg-85, Arg-110, and 136-144; that span reads DPMLATGNS. Residues Ile-201 and 206-208 each bind uracil; that span reads GDA. A 5-phospho-alpha-D-ribose 1-diphosphate-binding site is contributed by Asp-207.

This sequence belongs to the UPRTase family. Mg(2+) is required as a cofactor.

The enzyme catalyses UMP + diphosphate = 5-phospho-alpha-D-ribose 1-diphosphate + uracil. The protein operates within pyrimidine metabolism; UMP biosynthesis via salvage pathway; UMP from uracil: step 1/1. Its activity is regulated as follows. Allosterically activated by GTP. Catalyzes the conversion of uracil and 5-phospho-alpha-D-ribose 1-diphosphate (PRPP) to UMP and diphosphate. The sequence is that of Uracil phosphoribosyltransferase from Rhodospirillum centenum (strain ATCC 51521 / SW).